The chain runs to 263 residues: Proteasome subunit alpha (263 aa).

Residues alanine 229 to serine 263 form a disordered region.

The protein belongs to the peptidase T1A family. In terms of assembly, the 20S proteasome core is composed of 14 alpha and 14 beta subunits that assemble into four stacked heptameric rings, resulting in a barrel-shaped structure. The two inner rings, each composed of seven catalytic beta subunits, are sandwiched by two outer rings, each composed of seven alpha subunits. The catalytic chamber with the active sites is on the inside of the barrel. Has a gated structure, the ends of the cylinder being occluded by the N-termini of the alpha-subunits. Is capped by the proteasome-associated ATPase, ARC.

It localises to the cytoplasm. The protein operates within protein degradation; proteasomal Pup-dependent pathway. Its activity is regulated as follows. The formation of the proteasomal ATPase ARC-20S proteasome complex, likely via the docking of the C-termini of ARC into the intersubunit pockets in the alpha-rings, may trigger opening of the gate for substrate entry. Interconversion between the open-gate and close-gate conformations leads to a dynamic regulation of the 20S proteasome proteolysis activity. Its function is as follows. Component of the proteasome core, a large protease complex with broad specificity involved in protein degradation. The sequence is that of Proteasome subunit alpha from Actinosynnema mirum (strain ATCC 29888 / DSM 43827 / JCM 3225 / NBRC 14064 / NCIMB 13271 / NRRL B-12336 / IMRU 3971 / 101).